Consider the following 129-residue polypeptide: Small ribosomal subunit protein uS11 (129 aa).

Belongs to the universal ribosomal protein uS11 family. Part of the 30S ribosomal subunit. Interacts with proteins S7 and S18. Binds to IF-3.

Located on the platform of the 30S subunit, it bridges several disparate RNA helices of the 16S rRNA. Forms part of the Shine-Dalgarno cleft in the 70S ribosome. The sequence is that of Small ribosomal subunit protein uS11 from Methylocella silvestris (strain DSM 15510 / CIP 108128 / LMG 27833 / NCIMB 13906 / BL2).